The primary structure comprises 1201 residues: DNA-directed RNA polymerase subunit beta' (1201 aa).

4 residues coordinate Zn(2+): C60, C62, C75, and C78. Positions 449, 451, and 453 each coordinate Mg(2+). C818, C892, C899, and C902 together coordinate Zn(2+).

The protein belongs to the RNA polymerase beta' chain family. In terms of assembly, the RNAP catalytic core consists of 2 alpha, 1 beta, 1 beta' and 1 omega subunit. When a sigma factor is associated with the core the holoenzyme is formed, which can initiate transcription. Requires Mg(2+) as cofactor. Zn(2+) serves as cofactor.

The enzyme catalyses RNA(n) + a ribonucleoside 5'-triphosphate = RNA(n+1) + diphosphate. Functionally, DNA-dependent RNA polymerase catalyzes the transcription of DNA into RNA using the four ribonucleoside triphosphates as substrates. This Listeria monocytogenes serotype 4b (strain F2365) protein is DNA-directed RNA polymerase subunit beta'.